Consider the following 251-residue polypeptide: Hydroxyacylglutathione hydrolase (251 aa).

7 residues coordinate Zn(2+): histidine 53, histidine 55, aspartate 57, histidine 58, histidine 110, aspartate 127, and histidine 165.

This sequence belongs to the metallo-beta-lactamase superfamily. Glyoxalase II family. Monomer. It depends on Zn(2+) as a cofactor.

It catalyses the reaction an S-(2-hydroxyacyl)glutathione + H2O = a 2-hydroxy carboxylate + glutathione + H(+). Its pathway is secondary metabolite metabolism; methylglyoxal degradation; (R)-lactate from methylglyoxal: step 2/2. In terms of biological role, thiolesterase that catalyzes the hydrolysis of S-D-lactoyl-glutathione to form glutathione and D-lactic acid. In Edwardsiella ictaluri (strain 93-146), this protein is Hydroxyacylglutathione hydrolase.